The chain runs to 230 residues: Inactive L-threonine 3-dehydrogenase, mitochondrial (230 aa).

This sequence belongs to the NAD(P)-dependent epimerase/dehydratase family. In terms of tissue distribution, expressed in all tissues examined. Detected in most cell types examined, but not observed in endothelial cells, glioma cell lines and some leukemia cell lines.

Its subcellular location is the mitochondrion. The polypeptide is Inactive L-threonine 3-dehydrogenase, mitochondrial (Homo sapiens (Human)).